A 237-amino-acid polypeptide reads, in one-letter code: Thiamine-phosphate synthase (237 aa).

4-amino-2-methyl-5-(diphosphooxymethyl)pyrimidine is bound by residues 57–61 (QLRDK) and Asn98. Residues Asp99 and Asp118 each contribute to the Mg(2+) site. Ser136 serves as a coordination point for 4-amino-2-methyl-5-(diphosphooxymethyl)pyrimidine. 162–164 (TPT) contributes to the 2-[(2R,5Z)-2-carboxy-4-methylthiazol-5(2H)-ylidene]ethyl phosphate binding site. Lys165 is a 4-amino-2-methyl-5-(diphosphooxymethyl)pyrimidine binding site. Position 193 (Gly193) interacts with 2-[(2R,5Z)-2-carboxy-4-methylthiazol-5(2H)-ylidene]ethyl phosphate.

This sequence belongs to the thiamine-phosphate synthase family. Mg(2+) serves as cofactor.

It catalyses the reaction 2-[(2R,5Z)-2-carboxy-4-methylthiazol-5(2H)-ylidene]ethyl phosphate + 4-amino-2-methyl-5-(diphosphooxymethyl)pyrimidine + 2 H(+) = thiamine phosphate + CO2 + diphosphate. It carries out the reaction 2-(2-carboxy-4-methylthiazol-5-yl)ethyl phosphate + 4-amino-2-methyl-5-(diphosphooxymethyl)pyrimidine + 2 H(+) = thiamine phosphate + CO2 + diphosphate. The catalysed reaction is 4-methyl-5-(2-phosphooxyethyl)-thiazole + 4-amino-2-methyl-5-(diphosphooxymethyl)pyrimidine + H(+) = thiamine phosphate + diphosphate. It functions in the pathway cofactor biosynthesis; thiamine diphosphate biosynthesis; thiamine phosphate from 4-amino-2-methyl-5-diphosphomethylpyrimidine and 4-methyl-5-(2-phosphoethyl)-thiazole: step 1/1. Its function is as follows. Condenses 4-methyl-5-(beta-hydroxyethyl)thiazole monophosphate (THZ-P) and 2-methyl-4-amino-5-hydroxymethyl pyrimidine pyrophosphate (HMP-PP) to form thiamine monophosphate (TMP). This chain is Thiamine-phosphate synthase, found in Mycolicibacterium gilvum (strain PYR-GCK) (Mycobacterium gilvum (strain PYR-GCK)).